A 25-amino-acid polypeptide reads, in one-letter code: Hypotensin-2 (25 aa).

The segment at 1-25 (AEIDFSGIPEDIIKEIKETNAKPPA) is disordered. Phosphoserine is present on Ser6. The span at 11 to 25 (DIIKEIKETNAKPPA) shows a compositional bias: basic and acidic residues.

Belongs to the non-disulfide-bridged peptide (NDBP) superfamily. As to expression, expressed by the venom gland.

It is found in the secreted. Functionally, agonist of the B2 bradykinin receptor (BDKRB2). Potentiates the hypotensive effect of bradykinin (BK) and induces a direct vasorelaxing effect, independently of BK, by endothelium- and nitric oxide (NO)-dependent mechanisms in rat aortic ring preparations. Does not inhibit the angiotensin-converting enzyme (ACE). Also exerts proangiogenic, antiinflammatory, and antifibrogenic activities. Does not inhibit the angiotensin-converting enzyme (ACE) but weakly increases its activity, and weakly inhibits neprilysin (NEP) in a non-competitive manner. Exerts intermediate cytotoxicity and pro-inflammatory effects on mouse macrophages, and increases the phagocytic activity of these murine cells. In terms of biological role, presents weak hemolytic activity at physiological concentrations (micromolar range), and weak lactate dehydrogenase (LDH) release from mast cells. Does not induce mast cell degranulation, and antimicrobial effects. In vivo, causes intense pain (but no edema formation), when injected in mice hind paws. Also induces discomfort and anxiety in mice, as it moderately diminishes locomotion and moderately increases rearing behavior. The sequence is that of Hypotensin-2 from Tityus serrulatus (Brazilian scorpion).